The chain runs to 217 residues: CD99 antigen-like protein 2 (217 aa).

The first 25 residues, 1-25, serve as a signal peptide directing secretion; the sequence is MVAWRWACLICLAFSLTTLVQRGSG. The Extracellular segment spans residues 26-141; sequence DTGGFRLEDA…DDSGMSAETG (116 aa). The tract at residues 36–136 is disordered; sequence VEGTSSVKQR…GGDNSDDSGM (101 aa). A compositionally biased stretch (low complexity) spans 50–64; sequence TTTTRRPGATRAPAK. Over residues 70 to 82 the composition is skewed to acidic residues; sequence AEDDFNLADALDD. A compositionally biased stretch (basic and acidic residues) spans 83–92; that stretch reads QNDRDHDRKK. The O-linked (Xyl...) (chondroitin sulfate) serine glycan is linked to Ser134. A helical transmembrane segment spans residues 142-162; that stretch reads TIAGVASALAMALIGAVSSYI. Over 163–217 the chain is Cytoplasmic; it reads SYQQKKFCFSIQQGLNADYVKGENLEAVVCEEPQVKYSALQTQSTEPPPPEPPRI.

The protein belongs to the CD99 family. O-glycosylated.

Its subcellular location is the cell membrane. It localises to the cell junction. It is found in the secreted. Its function is as follows. Plays a role in a late step of leukocyte extravasation helping cells to overcome the endothelial basement membrane. Acts at the same site as, but independently of, PECAM1. Homophilic adhesion molecule, but these interactions may not be required for cell aggregation. This Bos taurus (Bovine) protein is CD99 antigen-like protein 2 (CD99L2).